The primary structure comprises 92 residues: uncharacterized protein (92 aa).

A disordered region spans residues 1 to 92 (MSDAAAPAQA…PSPSQQQVAA (92 aa)).

This is an uncharacterized protein from Caenorhabditis elegans.